Here is a 224-residue protein sequence, read N- to C-terminus: Ribose-5-phosphate isomerase A (224 aa).

Substrate-binding positions include T32 to T35, D85 to D88, and K98 to G101. E107 acts as the Proton acceptor in catalysis. K125 contacts substrate.

This sequence belongs to the ribose 5-phosphate isomerase family. In terms of assembly, homodimer.

It carries out the reaction aldehydo-D-ribose 5-phosphate = D-ribulose 5-phosphate. It functions in the pathway carbohydrate degradation; pentose phosphate pathway; D-ribose 5-phosphate from D-ribulose 5-phosphate (non-oxidative stage): step 1/1. In terms of biological role, catalyzes the reversible conversion of ribose-5-phosphate to ribulose 5-phosphate. This Pseudomonas fluorescens (strain Pf0-1) protein is Ribose-5-phosphate isomerase A.